Reading from the N-terminus, the 450-residue chain is 23S rRNA (uracil(1939)-C(5))-methyltransferase RlmD (450 aa).

The TRAM domain occupies 12–70 (SKQLSAKLSLNVDQLDHLGAGIAQYQGKVVFIPGALPDETVTVQLTEQKKNYARAKLIK). Residues cysteine 83, cysteine 89, cysteine 92, and cysteine 171 each contribute to the [4Fe-4S] cluster site. 6 residues coordinate S-adenosyl-L-methionine: glutamine 283, phenylalanine 312, asparagine 317, glutamate 333, aspartate 360, and aspartate 380. Cysteine 406 serves as the catalytic Nucleophile.

It belongs to the class I-like SAM-binding methyltransferase superfamily. RNA M5U methyltransferase family. RlmD subfamily.

The enzyme catalyses uridine(1939) in 23S rRNA + S-adenosyl-L-methionine = 5-methyluridine(1939) in 23S rRNA + S-adenosyl-L-homocysteine + H(+). Its function is as follows. Catalyzes the formation of 5-methyl-uridine at position 1939 (m5U1939) in 23S rRNA. The polypeptide is 23S rRNA (uracil(1939)-C(5))-methyltransferase RlmD (Shewanella putrefaciens (strain CN-32 / ATCC BAA-453)).